A 410-amino-acid polypeptide reads, in one-letter code: Putative odorant receptor 65c (410 aa).

Over M1–S59 the chain is Cytoplasmic. Residues W60 to T80 form a helical membrane-spanning segment. Residues E81–D92 are Extracellular-facing. The helical transmembrane segment at I93–G113 threads the bilayer. Residues D114–T148 are Cytoplasmic-facing. Residues L149–I169 traverse the membrane as a helical segment. Residues T170 to E222 are Extracellular-facing. A helical transmembrane segment spans residues G223–L243. Residues R244–K279 are Cytoplasmic-facing. The helical transmembrane segment at V280 to V300 threads the bilayer. The Extracellular segment spans residues L301–V312. The chain crosses the membrane as a helical span at residues V313–F333. Over G334–S385 the chain is Cytoplasmic. A helical transmembrane segment spans residues F386–L406. The Extracellular segment spans residues K407–D410.

The protein belongs to the insect chemoreceptor superfamily. Heteromeric odorant receptor channel (TC 1.A.69) family. Or49a subfamily. As to quaternary structure, interacts with Orco. Complexes exist early in the endomembrane system in olfactory sensory neurons (OSNs), coupling these complexes to the conserved ciliary trafficking pathway.

The protein resides in the cell membrane. In terms of biological role, odorant receptor which mediates acceptance or avoidance behavior, depending on its substrates. The odorant receptor repertoire encodes a large collection of odor stimuli that vary widely in identity, intensity, and duration. May form a complex with Orco to form odorant-sensing units, providing sensitive and prolonged odorant signaling and calcium permeability. This chain is Putative odorant receptor 65c (Or65c), found in Drosophila melanogaster (Fruit fly).